The chain runs to 529 residues: tRNA (uracil-O(2)-)-methyltransferase (529 aa).

A disordered region spans residues 78–107 (IFDTHEGPVDDDKKDTDKDKNTPVPPNLQD). Residues 80-98 (DTHEGPVDDDKKDTDKDKN) are compositionally biased toward basic and acidic residues.

Belongs to the TRM44 family.

Its subcellular location is the cytoplasm. It carries out the reaction uridine(44) in tRNA(Ser) + S-adenosyl-L-methionine = 2'-O-methyluridine(44) in tRNA(Ser) + S-adenosyl-L-homocysteine + H(+). Functionally, probable adenosyl-L-methionine (AdoMet)-dependent tRNA (uracil-O(2)-)-methyltransferase. The protein is tRNA (uracil-O(2)-)-methyltransferase (TRM44) of Yarrowia lipolytica (strain CLIB 122 / E 150) (Yeast).